Here is a 68-residue protein sequence, read N- to C-terminus: Beta-defensin 1 (68 aa).

Residues methionine 1 to glycine 21 form the signal peptide. The propeptide occupies aspartate 22–serine 32. Cystine bridges form between cysteine 37–cysteine 66, cysteine 44–cysteine 59, and cysteine 49–cysteine 67.

It belongs to the beta-defensin family. As to quaternary structure, monomer. Homodimer.

It localises to the secreted. It is found in the membrane. In terms of biological role, has bactericidal activity. May act as a ligand for C-C chemokine receptor CCR6. Positively regulates the sperm motility and bactericidal activity in a CCR6-dependent manner. Binds to CCR6 and triggers Ca2+ mobilization in the sperm which is important for its motility. The chain is Beta-defensin 1 (DEFB1) from Cercopithecus erythrogaster (Red-bellied monkey).